The sequence spans 371 residues: DNA replication and repair protein RecF (371 aa).

Position 30 to 37 (30 to 37) interacts with ATP; it reads GQNGMGKT.

Belongs to the RecF family.

The protein resides in the cytoplasm. Functionally, the RecF protein is involved in DNA metabolism; it is required for DNA replication and normal SOS inducibility. RecF binds preferentially to single-stranded, linear DNA. It also seems to bind ATP. This chain is DNA replication and repair protein RecF, found in Phocaeicola vulgatus (strain ATCC 8482 / DSM 1447 / JCM 5826 / CCUG 4940 / NBRC 14291 / NCTC 11154) (Bacteroides vulgatus).